The following is a 344-amino-acid chain: MPNCFKFHTVIERHWQKPYPVLSFLLKPLSGLFAKIAAKRRTDFLSGKRQSEKLPVPVVVVGNIHAGGTGKTPIVAALVSGLQEKGVKVGIISRGYGRKSKAVHVLNAESRAEDAGDEPLLLFRKTGAPTAVGSSRAEAGRALLAAHPDIGLIVADDGLQHYALRRDVEIAVFPAADTGRTDLDLLPNGSLREPLLRLDSVDAVVVSGGKADALFRPSENMFHSRIEAGRIYRLNNPSEILDTGRLKNQTVVAVAGIAKPARFFDSLRNMGITVKRTVALPDHADISAADLPDADAVIITEKDAVKFSDGICTDNVWVLPVCAIIEPDLAAFVLERLEDVPKAV.

Position 65–72 (65–72) interacts with ATP; sequence HAGGTGKT.

Belongs to the LpxK family.

The enzyme catalyses a lipid A disaccharide + ATP = a lipid IVA + ADP + H(+). The protein operates within glycolipid biosynthesis; lipid IV(A) biosynthesis; lipid IV(A) from (3R)-3-hydroxytetradecanoyl-[acyl-carrier-protein] and UDP-N-acetyl-alpha-D-glucosamine: step 6/6. Its function is as follows. Transfers the gamma-phosphate of ATP to the 4'-position of a tetraacyldisaccharide 1-phosphate intermediate (termed DS-1-P) to form tetraacyldisaccharide 1,4'-bis-phosphate (lipid IVA). This Neisseria meningitidis serogroup B (strain ATCC BAA-335 / MC58) protein is Tetraacyldisaccharide 4'-kinase.